The following is a 453-amino-acid chain: Phosphoglucosamine mutase (453 aa).

S109 serves as the catalytic Phosphoserine intermediate. The Mg(2+) site is built by S109, D246, D248, and D250. Residue S109 is modified to Phosphoserine.

This sequence belongs to the phosphohexose mutase family. Mg(2+) is required as a cofactor. Post-translationally, activated by phosphorylation.

The enzyme catalyses alpha-D-glucosamine 1-phosphate = D-glucosamine 6-phosphate. In terms of biological role, catalyzes the conversion of glucosamine-6-phosphate to glucosamine-1-phosphate. The chain is Phosphoglucosamine mutase from Leifsonia xyli subsp. xyli (strain CTCB07).